The chain runs to 572 residues: Delta-1-pyrroline-5-carboxylate dehydrogenase, mitochondrial (572 aa).

300-305 (GQISTR) is an NAD(+) binding site. Glu-320 serves as the catalytic Proton acceptor. The active-site Nucleophile is the Cys-354.

Belongs to the aldehyde dehydrogenase family.

It localises to the mitochondrion matrix. The catalysed reaction is L-glutamate 5-semialdehyde + NAD(+) + H2O = L-glutamate + NADH + 2 H(+). The protein operates within amino-acid degradation; L-proline degradation into L-glutamate; L-glutamate from L-proline: step 2/2. The protein is Delta-1-pyrroline-5-carboxylate dehydrogenase, mitochondrial (prnC) of Emericella nidulans (strain FGSC A4 / ATCC 38163 / CBS 112.46 / NRRL 194 / M139) (Aspergillus nidulans).